Reading from the N-terminus, the 428-residue chain is Acetyltransferase sirH (428 aa).

Asparagine 8 carries an N-linked (GlcNAc...) asparagine glycan. Helical transmembrane passes span 33 to 53 (LLTP…PGPL), 55 to 75 (VIVG…HWVS), 78 to 98 (AFFM…LMFV), 305 to 325 (LYVG…LIPS), 329 to 349 (GWGM…EDIL), and 366 to 386 (FLGY…PVGF).

Belongs to the wax synthase family.

It localises to the membrane. It participates in polyketide biosynthesis. Acetyltransferase; part of the gene cluster that mediates the biosynthesis of asperlin, a polyketide showing anti-inflammatory, antitumor and antibiotic activities. The first step of the asperlin biosynthesis is the production of the intermediate 2,4,6-octatrienoic acid by the highly redusing polyketide synthase alnA with cleavage of the PKS product by the esterase alnB. 2,4,6-octatrienoic acid is further converted to asperlin via several steps involving the remaining enzymes from the cluster. The protein is Acetyltransferase sirH of Emericella nidulans (strain FGSC A4 / ATCC 38163 / CBS 112.46 / NRRL 194 / M139) (Aspergillus nidulans).